Reading from the N-terminus, the 560-residue chain is DNA ligase B (560 aa).

Residue Lys124 is the N6-AMP-lysine intermediate of the active site.

The protein belongs to the NAD-dependent DNA ligase family. LigB subfamily.

The catalysed reaction is NAD(+) + (deoxyribonucleotide)n-3'-hydroxyl + 5'-phospho-(deoxyribonucleotide)m = (deoxyribonucleotide)n+m + AMP + beta-nicotinamide D-nucleotide.. Functionally, catalyzes the formation of phosphodiester linkages between 5'-phosphoryl and 3'-hydroxyl groups in double-stranded DNA using NAD as a coenzyme and as the energy source for the reaction. This Escherichia coli (strain ATCC 8739 / DSM 1576 / NBRC 3972 / NCIMB 8545 / WDCM 00012 / Crooks) protein is DNA ligase B.